The primary structure comprises 99 residues: Cell division protein FtsB (99 aa).

Over 1–3 the chain is Cytoplasmic; sequence MKF. Residues 4 to 21 traverse the membrane as a helical segment; the sequence is FVITLIVLLGLLQYRLWS. Over 22–99 the chain is Periplasmic; sequence GDNSLPEYFV…GDRAVSSPSQ (78 aa). Positions 31 to 73 form a coiled coil; the sequence is VLQKQIAAQQDGNAKLNERNQVLKEEIIDLKSGTEAIEERARN.

This sequence belongs to the FtsB family. In terms of assembly, part of a complex composed of FtsB, FtsL and FtsQ.

The protein localises to the cell inner membrane. Essential cell division protein. May link together the upstream cell division proteins, which are predominantly cytoplasmic, with the downstream cell division proteins, which are predominantly periplasmic. This Shewanella oneidensis (strain ATCC 700550 / JCM 31522 / CIP 106686 / LMG 19005 / NCIMB 14063 / MR-1) protein is Cell division protein FtsB.